The chain runs to 184 residues: Ribosome-recycling factor (184 aa).

The protein belongs to the RRF family.

The protein resides in the cytoplasm. Its function is as follows. Responsible for the release of ribosomes from messenger RNA at the termination of protein biosynthesis. May increase the efficiency of translation by recycling ribosomes from one round of translation to another. This Acholeplasma laidlawii (strain PG-8A) protein is Ribosome-recycling factor.